The sequence spans 397 residues: DnaJ homolog subfamily A member 4 (397 aa).

The J domain occupies 4 to 70 (ETQYYDILGV…RDVYDQGGEQ (67 aa)). A Phosphoserine modification is found at Ser18. A CR-type zinc finger spans residues 122–206 (GVTKKLALQK…CSGAKVIREK (85 aa)). Cys135, Cys138, Cys151, Cys154, Cys178, Cys181, Cys194, and Cys197 together coordinate Zn(2+). 4 CXXCXGXG motif repeats span residues 135–142 (CEKCEGVG), 151–158 (CPLCKGRG), 178–185 (CIECKGQG), and 194–201 (CESCSGAK). Cys394 is modified (cysteine methyl ester). Cys394 carries S-farnesyl cysteine lipidation. A propeptide spans 395–397 (QTA) (removed in mature form).

It localises to the membrane. This chain is DnaJ homolog subfamily A member 4 (DNAJA4), found in Homo sapiens (Human).